A 1405-amino-acid chain; its full sequence is DNA-directed RNA polymerase subunit beta' (1405 aa).

Residues cysteine 70, cysteine 72, cysteine 85, and cysteine 88 each contribute to the Zn(2+) site. Residues aspartate 458, aspartate 460, and aspartate 462 each contribute to the Mg(2+) site. Residues cysteine 813, cysteine 887, cysteine 894, and cysteine 897 each contribute to the Zn(2+) site.

The protein belongs to the RNA polymerase beta' chain family. In terms of assembly, the RNAP catalytic core consists of 2 alpha, 1 beta, 1 beta' and 1 omega subunit. When a sigma factor is associated with the core the holoenzyme is formed, which can initiate transcription. Requires Mg(2+) as cofactor. The cofactor is Zn(2+).

The enzyme catalyses RNA(n) + a ribonucleoside 5'-triphosphate = RNA(n+1) + diphosphate. In terms of biological role, DNA-dependent RNA polymerase catalyzes the transcription of DNA into RNA using the four ribonucleoside triphosphates as substrates. This Albidiferax ferrireducens (strain ATCC BAA-621 / DSM 15236 / T118) (Rhodoferax ferrireducens) protein is DNA-directed RNA polymerase subunit beta'.